Consider the following 341-residue polypeptide: L-threonine 3-dehydrogenase (341 aa).

Cys38 serves as a coordination point for Zn(2+). Catalysis depends on charge relay system residues Thr40 and His43. The Zn(2+) site is built by His63, Glu64, Cys93, Cys96, Cys99, and Cys107. NAD(+)-binding positions include Ile175, Asp195, Arg200, 262 to 264 (LGI), and 286 to 287 (IY).

It belongs to the zinc-containing alcohol dehydrogenase family. In terms of assembly, homotetramer. It depends on Zn(2+) as a cofactor.

It is found in the cytoplasm. It catalyses the reaction L-threonine + NAD(+) = (2S)-2-amino-3-oxobutanoate + NADH + H(+). It functions in the pathway amino-acid degradation; L-threonine degradation via oxydo-reductase pathway; glycine from L-threonine: step 1/2. Its function is as follows. Catalyzes the NAD(+)-dependent oxidation of L-threonine to 2-amino-3-ketobutyrate. The polypeptide is L-threonine 3-dehydrogenase (Yersinia pseudotuberculosis serotype O:1b (strain IP 31758)).